Here is a 1488-residue protein sequence, read N- to C-terminus: Chromosome partition protein MukB (1488 aa).

Residue 34–41 (GGNGAGKS) coordinates ATP. Coiled coils occupy residues 326–418 (LEAD…QYNQ), 444–472 (LDTF…QTAH), and 509–602 (RHLA…QRAP). The flexible hinge stretch occupies residues 666 to 783 (PGGAEDQRLN…SLPIFGRAAR (118 aa)). Coiled coils occupy residues 835-923 (EAEI…AKLE), 977-1116 (EMLS…AKAG), and 1209-1265 (VEAI…LQSV). The segment at 1049–1074 (ADSGAEERARQRRDELHAQLSNNRSR) is disordered. Residues 1051–1065 (SGAEERARQRRDELH) are compositionally biased toward basic and acidic residues.

It belongs to the SMC family. MukB subfamily. In terms of assembly, homodimerization via its hinge domain. Binds to DNA via its C-terminal region. Interacts, and probably forms a ternary complex, with MukE and MukF via its C-terminal region. The complex formation is stimulated by calcium or magnesium. Interacts with tubulin-related protein FtsZ.

Its subcellular location is the cytoplasm. The protein resides in the nucleoid. In terms of biological role, plays a central role in chromosome condensation, segregation and cell cycle progression. Functions as a homodimer, which is essential for chromosome partition. Involved in negative DNA supercoiling in vivo, and by this means organize and compact chromosomes. May achieve or facilitate chromosome segregation by condensation DNA from both sides of a centrally located replisome during cell division. This Salmonella typhi protein is Chromosome partition protein MukB.